The primary structure comprises 195 residues: HTH-type transcriptional regulator BetI (195 aa).

Positions 8 to 68 (SIRRRQLIDA…ATMRDITSQL (61 aa)) constitute an HTH tetR-type domain. A DNA-binding region (H-T-H motif) is located at residues 31–50 (TIAQIARRAGVSTGIISHYF).

It functions in the pathway amine and polyamine biosynthesis; betaine biosynthesis via choline pathway [regulation]. In terms of biological role, repressor involved in the biosynthesis of the osmoprotectant glycine betaine. It represses transcription of the choline transporter BetT and the genes of BetAB involved in the synthesis of glycine betaine. The polypeptide is HTH-type transcriptional regulator BetI (Shigella flexneri serotype 5b (strain 8401)).